We begin with the raw amino-acid sequence, 607 residues long: DNA mismatch repair protein MutL (607 aa).

Residues 374-411 (RTEAGNEHVPSANRIQPPDPSIDMPDEPVPEQTDEPVA) are disordered. Over residues 397–407 (MPDEPVPEQTD) the composition is skewed to acidic residues.

It belongs to the DNA mismatch repair MutL/HexB family.

Functionally, this protein is involved in the repair of mismatches in DNA. It is required for dam-dependent methyl-directed DNA mismatch repair. May act as a 'molecular matchmaker', a protein that promotes the formation of a stable complex between two or more DNA-binding proteins in an ATP-dependent manner without itself being part of a final effector complex. This is DNA mismatch repair protein MutL from Exiguobacterium sibiricum (strain DSM 17290 / CCUG 55495 / CIP 109462 / JCM 13490 / 255-15).